The primary structure comprises 497 residues: uncharacterized protein (497 aa).

Transmembrane regions (helical) follow at residues 91 to 111 (WVGT…STLL), 119 to 139 (VTSA…LVHS), 149 to 169 (LLGI…AQWY), 179 to 199 (AFLV…SYGL), 215 to 235 (ILFI…FIHI), 283 to 303 (MYLY…LSNF), 319 to 339 (LLMN…FGLI), 347 to 367 (MDIA…IAFA), 374 to 394 (LAGY…LSCI), 406 to 426 (FMSA…PQTF), and 439 to 459 (VSFV…YAVN).

Belongs to the major facilitator superfamily. Allantoate permease family.

The protein localises to the golgi apparatus. It localises to the membrane. This is an uncharacterized protein from Schizosaccharomyces pombe (strain 972 / ATCC 24843) (Fission yeast).